A 456-amino-acid polypeptide reads, in one-letter code: RNA polymerase II-associated protein 1 homolog (456 aa).

A disordered region spans residues 382 to 456 (LRSVEGSLNE…PVEQLQNEED (75 aa)). Residue Ser388 is modified to Phosphoserine. The span at 396-406 (EEKPAESREQL) shows a compositional bias: basic and acidic residues. Composition is skewed to polar residues over residues 408–433 (SAEQ…QANS) and 441–456 (GNTQ…NEED).

It belongs to the PAF1 family.

The protein localises to the cytoplasm. It is found in the nucleus. This chain is RNA polymerase II-associated protein 1 homolog, found in Schizosaccharomyces pombe (strain 972 / ATCC 24843) (Fission yeast).